We begin with the raw amino-acid sequence, 365 residues long: Putative tRNA 2'-phosphotransferase (365 aa).

Disordered regions lie at residues 1–35 (MYKNMNSHELIEESNNSGTPATKSSSKPTKKIRPR) and 231–254 (LLDAKASPKNNRSDESDQSDPESI). Over residues 17 to 27 (SGTPATKSSSK) the composition is skewed to low complexity.

It belongs to the KptA/TPT1 family.

It carries out the reaction 2'-phospho-[ligated tRNA] + NAD(+) = mature tRNA + ADP-alpha-D-ribose 1'',2''-cyclic phosphate + nicotinamide. Catalyzes the last step of tRNA splicing, the transfer of the splice junction 2'-phosphate from ligated tRNA to NAD to produce ADP-ribose 1''-2'' cyclic phosphate. The protein is Putative tRNA 2'-phosphotransferase of Schizosaccharomyces pombe (strain 972 / ATCC 24843) (Fission yeast).